The chain runs to 665 residues: Phenol hydroxylase (665 aa).

FAD is bound by residues 18 to 19 (PA), 43 to 45 (DKR), 51 to 56 (NGQADG), Gln-118, Tyr-290, Asp-358, and 368 to 372 (GQGMN). Residue Asp-55 participates in substrate binding. Residue Tyr-290 coordinates substrate.

This sequence belongs to the PheA/TfdB FAD monooxygenase family. In terms of assembly, homodimer. Requires FAD as cofactor.

It carries out the reaction phenol + NADPH + O2 + H(+) = catechol + NADP(+) + H2O. It functions in the pathway aromatic compound metabolism; phenol degradation. Inhibited by excess phenol. Heavy metals such AsCuSO(4), AgNO(3), or HgCl(2) severely inhibit activity. Functionally, hydroxylates phenol to catechol. Phenol is the best substrate, but the enzyme also accepts isomeric diphenols, hydroxyl-, amino-, halogen- or methyl-substituted phenols and, to a lesser degree, cresols. In Cutaneotrichosporon cutaneum (Yeast), this protein is Phenol hydroxylase.